The primary structure comprises 672 residues: Segment polarity protein dishevelled homolog mig-5 (672 aa).

A DIX domain is found at 9–91 (CSQIKVFYYL…GFYEIFLVST (83 aa)). 3 disordered regions span residues 97-127 (LPRN…ATPY), 150-174 (YTSN…SSLY), and 187-215 (DDDR…ATES). Positions 98-108 (PRNSGTMTRPQ) are enriched in polar residues. The span at 160–169 (YDEHTRRTGD) shows a compositional bias: basic and acidic residues. A compositionally biased stretch (basic residues) spans 191–202 (RRKKQKKERFRR). A PDZ domain is found at 226-294 (EIYLPMKNVP…PQAVRSLREA (69 aa)). The region spanning 427–501 (PDSGLAVKNR…TEKCYYVFGD (75 aa)) is the DEP domain. The tract at residues 604 to 672 (KNNHRQVPAP…SNSRTRILRT (69 aa)) is disordered. A compositionally biased stretch (polar residues) spans 660–672 (ENSSNSRTRILRT).

Belongs to the DSH family.

The protein resides in the cytoplasm. It localises to the cell cortex. Its subcellular location is the cell membrane. The protein localises to the cell junction. In terms of biological role, plays a role in the signal transduction pathways mediated by multiple Wnt genes. Functions redundantly with other dishevelled family members throughout development. During embryonic and larval development, controls cell migration and/or cell fate specification of hypodermal cells, hypodermal seam cells, vulval precursor cells and, through distal tip cell migration, somatic gonad precursor cells. In early embryos, regulates the orientation of the mitotic spindle of blastomeres and specifically, along with dsh-2, is required for the correct mitotic spindle orientation of the ABar blastomere division plane. Controls the polarity and the asymmetric localization of downstream components of the wnt/beta-catenin asymmetry pathway, and in particular, controls the asymmetric localization of the wnt receptor lin-17/Frizzled in ectodermal blast B cells. May act redundantly with dsh-2 to regulate the expression and nuclear localization of the beta-catenin homolog wrm-2, but alone seems to be required for the polarity of wrm-2 during the asymmetric cell division of hypodermal seam cells. Also, maintains the polarity and migration of QL neuroblasts in larvae. During the embryonic development of touch receptor neurons, may act redundantly with dsh-1, downstream of wnt signaling ligands and the wnt receptor lin-17/Frizzled, to direct the growth of neurites of touch receptor neurons towards the anterior of the body of the worm and towards the PLM touch receptor neuron and other tail neurons. May play a role in the guidance of posterior D-type motor neuron axons along the anteroposterior axis. This is Segment polarity protein dishevelled homolog mig-5 from Caenorhabditis elegans.